Consider the following 372-residue polypeptide: MTETKTQTETETDEEEGTDTDTALDTTIYYDDDADREYIDDKTVAVLGYGSQGHAHAQNLADSGIDVIVGLYEGSSSRDAARADGLRVETPATAADEADIVSVLVPDTVQPDVFEAIQDGLDAGDTLQFAHGFNIHYNQIQPPADVDVTMVAPKAPGHLVRRNYEAGEGTPGLVAVYQNTTGTARKEAVAYAHAIGCTRAGAIETTFREETETDLFGEQAVLCGGATALVKQGYETLVDAGYSPEMAYFECLNELKLIVDLMYEGGLSEMWNSVSDTAEYGGLTRGNQVIDESVREEMESILEGVQDGTFAREWISENQANRPSYTQLKAAEEAHEIEAVGEPLRDLFAWSDNEETNDESDVVSEPEAAADD.

Residues methionine 1–aspartate 25 are disordered. The segment covering threonine 10 to aspartate 19 has biased composition (acidic residues). The KARI N-terminal Rossmann domain maps to leucine 24–threonine 205. NADP(+) contacts are provided by residues tyrosine 49–glutamine 52, serine 75, serine 77, and aspartate 107–glutamine 110. The active site involves histidine 131. Glycine 157 contacts NADP(+). A KARI C-terminal knotted domain is found at threonine 206–serine 351. The Mg(2+) site is built by aspartate 214, glutamate 218, glutamate 250, and glutamate 254. Residue serine 275 participates in substrate binding. The tract at residues serine 351 to aspartate 372 is disordered. Positions aspartate 352 to aspartate 372 are enriched in acidic residues.

Belongs to the ketol-acid reductoisomerase family. The cofactor is Mg(2+).

The enzyme catalyses (2R)-2,3-dihydroxy-3-methylbutanoate + NADP(+) = (2S)-2-acetolactate + NADPH + H(+). It catalyses the reaction (2R,3R)-2,3-dihydroxy-3-methylpentanoate + NADP(+) = (S)-2-ethyl-2-hydroxy-3-oxobutanoate + NADPH + H(+). It participates in amino-acid biosynthesis; L-isoleucine biosynthesis; L-isoleucine from 2-oxobutanoate: step 2/4. Its pathway is amino-acid biosynthesis; L-valine biosynthesis; L-valine from pyruvate: step 2/4. Involved in the biosynthesis of branched-chain amino acids (BCAA). Catalyzes an alkyl-migration followed by a ketol-acid reduction of (S)-2-acetolactate (S2AL) to yield (R)-2,3-dihydroxy-isovalerate. In the isomerase reaction, S2AL is rearranged via a Mg-dependent methyl migration to produce 3-hydroxy-3-methyl-2-ketobutyrate (HMKB). In the reductase reaction, this 2-ketoacid undergoes a metal-dependent reduction by NADPH to yield (R)-2,3-dihydroxy-isovalerate. The sequence is that of Ketol-acid reductoisomerase (NADP(+)) from Haloquadratum walsbyi (strain DSM 16790 / HBSQ001).